The following is a 215-amino-acid chain: Ras-related protein RAB1BV (215 aa).

GTP is bound by residues 22–29 (GDSGVGKS), 70–74 (DTAGQ), and 128–131 (NKAD). The disordered stretch occupies residues 183-215 (DSDTRQEAQPSITIKPADQSGNQAAAKSACCGS). S-geranylgeranyl cysteine attachment occurs at residues C212 and C213.

It belongs to the small GTPase superfamily. Rab family.

The protein localises to the cell membrane. In Beta vulgaris (Sugar beet), this protein is Ras-related protein RAB1BV (RAB1BV).